Consider the following 380-residue polypeptide: Cytochrome b (380 aa).

Transmembrane regions (helical) follow at residues 34–54, 78–99, 114–134, and 179–199; these read FGSL…LLAT, WLIR…YLHI, WNTG…GYVL, and FFAL…IHLT. H84 and H98 together coordinate heme b. The heme b site is built by H183 and H197. H202 contributes to the a ubiquinone binding site. A run of 4 helical transmembrane segments spans residues 227 to 247, 289 to 309, 321 to 341, and 348 to 368; these read LKDI…ALFS, LGGV…PFLH, ISQL…WIGS, and FIII…ALFP.

The protein belongs to the cytochrome b family. The cytochrome bc1 complex contains 11 subunits: 3 respiratory subunits (MT-CYB, CYC1 and UQCRFS1), 2 core proteins (UQCRC1 and UQCRC2) and 6 low-molecular weight proteins (UQCRH/QCR6, UQCRB/QCR7, UQCRQ/QCR8, UQCR10/QCR9, UQCR11/QCR10 and a cleavage product of UQCRFS1). This cytochrome bc1 complex then forms a dimer. Heme b is required as a cofactor.

The protein localises to the mitochondrion inner membrane. Its function is as follows. Component of the ubiquinol-cytochrome c reductase complex (complex III or cytochrome b-c1 complex) that is part of the mitochondrial respiratory chain. The b-c1 complex mediates electron transfer from ubiquinol to cytochrome c. Contributes to the generation of a proton gradient across the mitochondrial membrane that is then used for ATP synthesis. The sequence is that of Cytochrome b (MT-CYB) from Buteo buteo (Eurasian buzzard).